A 213-amino-acid polypeptide reads, in one-letter code: Glycerol-3-phosphate acyltransferase (213 aa).

A run of 6 helical transmembrane segments spans residues 4–24, 48–68, 71–91, 113–133, 144–164, and 165–185; these read IILLLIASYLLGAIPFGLWIG, ILGVKAGISVFAFDLLKGTLA, LPLFFHINGVSPLIFGLLAVI, VILGFSPLFLIYLLVVFIIVL, VIGAVFALLGILIFPSIGFIL, and TSYDLLFSIIIFVLAIIIILR.

The protein belongs to the PlsY family. Probably interacts with PlsX.

The protein resides in the cell membrane. It carries out the reaction an acyl phosphate + sn-glycerol 3-phosphate = a 1-acyl-sn-glycero-3-phosphate + phosphate. It participates in lipid metabolism; phospholipid metabolism. In terms of biological role, catalyzes the transfer of an acyl group from acyl-phosphate (acyl-PO(4)) to glycerol-3-phosphate (G3P) to form lysophosphatidic acid (LPA). This enzyme utilizes acyl-phosphate as fatty acyl donor, but not acyl-CoA or acyl-ACP. In Lactococcus lactis subsp. lactis (strain IL1403) (Streptococcus lactis), this protein is Glycerol-3-phosphate acyltransferase.